Consider the following 456-residue polypeptide: GTPase Der (456 aa).

EngA-type G domains lie at 2–167 and 176–351; these read LKVA…DQFG and ATFC…AQLK. GTP contacts are provided by residues 8–15, 55–59, 118–121, 182–189, 229–233, and 294–297; these read GKPNVGKS, DTGGL, NKIE, DTAGI, and NKWD. A KH-like domain is found at 352–436; it reads IKISTSLLND…PITLYFKSKN (85 aa).

The protein belongs to the TRAFAC class TrmE-Era-EngA-EngB-Septin-like GTPase superfamily. EngA (Der) GTPase family. Associates with the 50S ribosomal subunit.

In terms of biological role, GTPase that plays an essential role in the late steps of ribosome biogenesis. In Mycoplasmoides gallisepticum (strain R(low / passage 15 / clone 2)) (Mycoplasma gallisepticum), this protein is GTPase Der.